A 148-amino-acid chain; its full sequence is 3-dehydroquinate dehydratase (148 aa).

The active-site Proton acceptor is Tyr24. The substrate site is built by Asn80, His86, and Asp93. His106 acts as the Proton donor in catalysis. Substrate contacts are provided by residues 107–108 (IS) and Arg117.

This sequence belongs to the type-II 3-dehydroquinase family. Homododecamer.

It catalyses the reaction 3-dehydroquinate = 3-dehydroshikimate + H2O. Its pathway is metabolic intermediate biosynthesis; chorismate biosynthesis; chorismate from D-erythrose 4-phosphate and phosphoenolpyruvate: step 3/7. Functionally, catalyzes a trans-dehydration via an enolate intermediate. This is 3-dehydroquinate dehydratase from Acidovorax sp. (strain JS42).